A 783-amino-acid polypeptide reads, in one-letter code: RNA exonuclease 5 (783 aa).

The Exonuclease domain occupies 230-378 (LFGLDCEMCL…EDARTTLELA (149 aa)). RRM domains lie at 503-577 (STVY…RPVT) and 598-677 (GTIY…RHLH).

This Bos taurus (Bovine) protein is RNA exonuclease 5 (REXO5).